The chain runs to 784 residues: LPS-assembly protein LptD (784 aa).

An N-terminal signal peptide occupies residues 1–24 (MKKRIPTLLATMIATALYSQQGLA). Disulfide bonds link Cys-31-Cys-724 and Cys-173-Cys-725.

This sequence belongs to the LptD family. Component of the lipopolysaccharide transport and assembly complex. Interacts with LptE and LptA. Post-translationally, contains two intramolecular disulfide bonds.

The protein localises to the cell outer membrane. Functionally, together with LptE, is involved in the assembly of lipopolysaccharide (LPS) at the surface of the outer membrane. In Shigella flexneri, this protein is LPS-assembly protein LptD.